We begin with the raw amino-acid sequence, 728 residues long: 1,4-alpha-glucan branching enzyme GlgB (728 aa).

Aspartate 405 (nucleophile) is an active-site residue. The Proton donor role is filled by glutamate 458.

This sequence belongs to the glycosyl hydrolase 13 family. GlgB subfamily. Monomer.

The catalysed reaction is Transfers a segment of a (1-&gt;4)-alpha-D-glucan chain to a primary hydroxy group in a similar glucan chain.. It participates in glycan biosynthesis; glycogen biosynthesis. Functionally, catalyzes the formation of the alpha-1,6-glucosidic linkages in glycogen by scission of a 1,4-alpha-linked oligosaccharide from growing alpha-1,4-glucan chains and the subsequent attachment of the oligosaccharide to the alpha-1,6 position. This chain is 1,4-alpha-glucan branching enzyme GlgB, found in Klebsiella pneumoniae subsp. pneumoniae (strain ATCC 700721 / MGH 78578).